The chain runs to 101 residues: Small ribosomal subunit protein uS14 (101 aa).

This sequence belongs to the universal ribosomal protein uS14 family. As to quaternary structure, part of the 30S ribosomal subunit. Contacts proteins S3 and S10.

Functionally, binds 16S rRNA, required for the assembly of 30S particles and may also be responsible for determining the conformation of the 16S rRNA at the A site. This chain is Small ribosomal subunit protein uS14, found in Haemophilus influenzae (strain 86-028NP).